The following is a 1714-amino-acid chain: Intersectin-1 (1714 aa).

Residues E21 to I109 form the EH 1 domain. Residues L53 to K88 enclose the EF-hand 1 domain. Residues D66, N68, D70, R72, and E77 each contribute to the Ca(2+) site. Residue S203 is modified to Phosphoserine. Residues S221–R310 enclose the EH 2 domain. The EF-hand 2 domain maps to L254–A289. The Ca(2+) site is built by D267, D269, D271, K273, and E278. Low complexity predominate over residues R310–V325. 2 disordered regions span residues R310–N356 and S614–L706. 3 positions are modified to phosphoserine: S318, S334, and S335. The segment at D326–K702 is KLERQ. Composition is skewed to basic and acidic residues over residues Q340–N356 and R622–L706. Positions R354–Q658 form a coiled coil. Position 685 is a phosphoserine (S685). In terms of domain architecture, SH3 1 spans V738 to E799. The segment at A827 to W863 is disordered. Positions V831–N855 are enriched in polar residues. T890 bears the Phosphothreonine mark. A phosphoserine mark is found at S894, S895, and S897. An SH3 2 domain is found at V906–G964. The residue at position 971 (S971) is a Phosphoserine. T977 bears the Phosphothreonine mark. Phosphoserine occurs at positions 979 and 988. SH3 domains lie at I995–S1053 and K1067–P1131. The required for interaction with FCHSD2 stretch occupies residues K1067–P1131. Positions R1097 to W1120 match the Bipartite nuclear localization signal; in isoform 2 motif. S1130 is modified (phosphoserine). The residue at position 1137 (T1137) is a Phosphothreonine. Residues P1148–D1207 form the SH3 5 domain. Positions K1230–G1416 constitute a DH domain. The PH domain occupies K1455–E1564. A C2 domain is found at K1572 to V1688. S1638 carries the post-translational modification Phosphoserine. Ca(2+) is bound by residues D1660, S1663, and D1666.

As to quaternary structure, interacts (via DH domain) with CDC42. Interacts (via SH3 domain 1) with WASL. Interacts with dynamin, SNAP25 and SNAP23. Interacts with clathrin-associated proteins and other components of the endocytic machinery, such as SPIN90, EPS15, EPN1, EPN2, STON2, FCHO1, FCHO2 and DAB2. Interacts (via SH3 domains) with REPS1 and SGIP1. Interacts with ARHGAP31. Interacts with ADAM15. Interacts with PRRT2. Interacts (via SH3 domain 4) with FCHSD2 (via SH3 domain 2). Interacts (via SH3 domain 1) with DENND2B. Interacts (via SH3 domains) with CBL. Isoform 2: Interacts with CBL and DNM1. Isoform 2: Interacts with LMNA. Isoform 2: Interacts with importin subunit KPNA1; this is likely to mediate its import into the nucleus. Interacts with DNM2. Ca(2+) is required as a cofactor. Detected in brain, adrenal gland and heart. Detected in neurons at the calyx of Held (at protein level). Isoform 1: Primarily detected in brain neurons. Isoform 2: Primarily detected in glia (at protein level). Widely expressed. Expressed at high levels in brain, heart and skeletal muscle.

It localises to the endomembrane system. It is found in the synapse. The protein localises to the synaptosome. The protein resides in the cell projection. Its subcellular location is the lamellipodium. It localises to the cell membrane. It is found in the membrane. The protein localises to the clathrin-coated pit. The protein resides in the recycling endosome. Its subcellular location is the endosome. It localises to the cytoplasmic vesicle. It is found in the cytoplasm. The protein localises to the nucleus envelope. Adapter protein that provides a link between the endocytic membrane traffic and the actin assembly machinery. Acts as a guanine nucleotide exchange factor (GEF) for CDC42, and thereby stimulates actin nucleation mediated by WASL and the ARP2/3 complex. Plays a role in the assembly and maturation of clathrin-coated vesicles. Recruits FCHSD2 to clathrin-coated pits. Involved in endocytosis of activated EGFR, and probably also other growth factor receptors. Involved in endocytosis of integrin beta-1 (ITGB1) and transferrin receptor (TFR); internalization of ITGB1 as DAB2-dependent cargo but not TFR may involve association with DAB2. Promotes ubiquitination and subsequent degradation of EGFR, and thereby contributes to the down-regulation of EGFR-dependent signaling pathways. In chromaffin cells, required for normal exocytosis of catecholamines. Required for rapid replenishment of release-ready synaptic vesicles at presynaptic active zones. Inhibits ARHGAP31 activity toward RAC1. Its function is as follows. Plays a role in synaptic vesicle endocytosis in brain neurons. This chain is Intersectin-1, found in Mus musculus (Mouse).